The following is a 346-amino-acid chain: tRNA N6-adenosine threonylcarbamoyltransferase (346 aa).

Fe cation-binding residues include His-111 and His-115. Residues Leu-134–Gly-138, Asp-167, Gly-180, and Asn-279 contribute to the substrate site. Residue Asp-307 coordinates Fe cation.

This sequence belongs to the KAE1 / TsaD family. It depends on Fe(2+) as a cofactor.

It is found in the cytoplasm. The enzyme catalyses L-threonylcarbamoyladenylate + adenosine(37) in tRNA = N(6)-L-threonylcarbamoyladenosine(37) in tRNA + AMP + H(+). In terms of biological role, required for the formation of a threonylcarbamoyl group on adenosine at position 37 (t(6)A37) in tRNAs that read codons beginning with adenine. Is involved in the transfer of the threonylcarbamoyl moiety of threonylcarbamoyl-AMP (TC-AMP) to the N6 group of A37, together with TsaE and TsaB. TsaD likely plays a direct catalytic role in this reaction. The chain is tRNA N6-adenosine threonylcarbamoyltransferase from Burkholderia ambifaria (strain MC40-6).